A 480-amino-acid chain; its full sequence is Proline--tRNA ligase (480 aa).

Belongs to the class-II aminoacyl-tRNA synthetase family. ProS type 3 subfamily. Homodimer.

It localises to the cytoplasm. The catalysed reaction is tRNA(Pro) + L-proline + ATP = L-prolyl-tRNA(Pro) + AMP + diphosphate. Functionally, catalyzes the attachment of proline to tRNA(Pro) in a two-step reaction: proline is first activated by ATP to form Pro-AMP and then transferred to the acceptor end of tRNA(Pro). This chain is Proline--tRNA ligase, found in Mycobacterium leprae (strain Br4923).